The primary structure comprises 335 residues: Nucleoid-associated protein CKO_00588 (335 aa).

This sequence belongs to the YejK family.

Its subcellular location is the cytoplasm. It is found in the nucleoid. In Citrobacter koseri (strain ATCC BAA-895 / CDC 4225-83 / SGSC4696), this protein is Nucleoid-associated protein CKO_00588.